Reading from the N-terminus, the 321-residue chain is uncharacterized protein (321 aa).

The segment covering 1–12 (MQGGREVGRESV) has biased composition (basic and acidic residues). The disordered stretch occupies residues 1–85 (MQGGREVGRE…GWGEFEGFQE (85 aa)). Residues 53 to 67 (NANSSRLDEGLSSSR) are compositionally biased toward polar residues.

This is an uncharacterized protein from Rattus norvegicus (Rat).